Consider the following 316-residue polypeptide: Universal stress protein E (316 aa).

The protein belongs to the universal stress protein A family.

It is found in the cytoplasm. Required for resistance to DNA-damaging agents. The chain is Universal stress protein E (uspE) from Escherichia coli O157:H7.